The following is a 580-amino-acid chain: NADH-ubiquinone oxidoreductase chain 5 (580 aa).

The next 16 helical transmembrane spans lie at 12-32 (FYFL…FLLM), 50-70 (IVMT…VLLI), 92-112 (ILLV…PNLI), 113-133 (SILL…IYFQ), 153-173 (VALL…YIFY), 183-203 (MMII…QIPF), 215-235 (TPVS…YLLI), 244-264 (WWMA…AGLG), 274-293 (IIAL…LSMG), 298-320 (AFFH…GSII), 343-363 (CSCF…AGFY), 367-387 (LILE…LFFF), 427-447 (ICFL…LMFL), 463-483 (LFVC…KLFF), 496-516 (FVGS…NYPL), and 560-580 (IYLL…VLVN).

This sequence belongs to the complex I subunit 5 family.

It localises to the mitochondrion inner membrane. It carries out the reaction a ubiquinone + NADH + 5 H(+)(in) = a ubiquinol + NAD(+) + 4 H(+)(out). Functionally, core subunit of the mitochondrial membrane respiratory chain NADH dehydrogenase (Complex I) that is believed to belong to the minimal assembly required for catalysis. Complex I functions in the transfer of electrons from NADH to the respiratory chain. The immediate electron acceptor for the enzyme is believed to be ubiquinone. The sequence is that of NADH-ubiquinone oxidoreductase chain 5 (mt:ND5) from Anopheles gambiae (African malaria mosquito).